A 371-amino-acid polypeptide reads, in one-letter code: Enterobactin C-glucosyltransferase (371 aa).

Belongs to the glycosyltransferase 28 family.

It is found in the cytoplasm. It carries out the reaction enterobactin + UDP-alpha-D-glucose = monoglucosyl-enterobactin + UDP. The enzyme catalyses monoglucosyl-enterobactin + UDP-alpha-D-glucose = diglucosyl-enterobactin + UDP + H(+). The catalysed reaction is diglucosyl-enterobactin + UDP-alpha-D-glucose = triglucosyl-enterobactin + UDP + H(+). Its pathway is siderophore biosynthesis; enterobactin biosynthesis. Catalyzes the successive monoglucosylation, diglucosylation and triglucosylation of enterobactin (Ent). Transfers glucosyl groups from uridine-5'-diphosphoglucose (UDP-Glc) to C5 of one, two or three of the 2,3-dihydroxybenzoyl (DHB) units of Ent to yield monoglucosyl-C-Ent (MGE), diglucosyl-C-Ent (DGE) and triglucosyl-C-Ent (TGE). Glucosylation decreases the membrane affinity of Ent and increases the iron acquisition rate. This is Enterobactin C-glucosyltransferase from Escherichia coli O6:H1 (strain CFT073 / ATCC 700928 / UPEC).